The following is a 192-amino-acid chain: Fe/S biogenesis protein NfuA (192 aa).

2 residues coordinate [4Fe-4S] cluster: Cys-149 and Cys-152.

Belongs to the NfuA family. Homodimer. It depends on [4Fe-4S] cluster as a cofactor.

Involved in iron-sulfur cluster biogenesis. Binds a 4Fe-4S cluster, can transfer this cluster to apoproteins, and thereby intervenes in the maturation of Fe/S proteins. Could also act as a scaffold/chaperone for damaged Fe/S proteins. The sequence is that of Fe/S biogenesis protein NfuA from Shewanella putrefaciens (strain CN-32 / ATCC BAA-453).